The primary structure comprises 145 residues: uncharacterized protein (145 aa).

Positions 37 to 123 (GKGTNTAKSS…MDREASYFAP (87 aa)) are disordered. Residues 38 to 63 (KGTNTAKSSGGNNGTNLNAKRSNTTQ) are compositionally biased toward polar residues.

This is an uncharacterized protein from Caenorhabditis elegans.